A 254-amino-acid polypeptide reads, in one-letter code: Phosphoribosylaminoimidazole-succinocarboxamide synthase (254 aa).

Belongs to the SAICAR synthetase family.

It carries out the reaction 5-amino-1-(5-phospho-D-ribosyl)imidazole-4-carboxylate + L-aspartate + ATP = (2S)-2-[5-amino-1-(5-phospho-beta-D-ribosyl)imidazole-4-carboxamido]succinate + ADP + phosphate + 2 H(+). The protein operates within purine metabolism; IMP biosynthesis via de novo pathway; 5-amino-1-(5-phospho-D-ribosyl)imidazole-4-carboxamide from 5-amino-1-(5-phospho-D-ribosyl)imidazole-4-carboxylate: step 1/2. This is Phosphoribosylaminoimidazole-succinocarboxamide synthase from Brucella canis (strain ATCC 23365 / NCTC 10854 / RM-666).